The primary structure comprises 105 residues: Delta-hexatoxin-Mg1a (105 aa).

The first 18 residues, 1–18 (MKTLVIACVALVLVVVHG), serve as a signal peptide directing secretion. Positions 19 to 60 (EVIEEVNEKQLQESVEEKYSLLQRLEKLDEAITAEENRNSRV) are excised as a propeptide. Disulfide bonds link cysteine 63/cysteine 77, cysteine 70/cysteine 82, cysteine 76/cysteine 93, and cysteine 78/cysteine 105.

It belongs to the neurotoxin 06 (delta-actx) family. Expressed by the venom gland.

Its subcellular location is the secreted. Selectively slows channel inactivation of mammalian Nav1.1/SCN1A, Nav1.3/SCN3A, and Nav1.6/SCN8A and shows higher affinity for insect Nav1/para channels (site 3). Induces tonic repetitive firing of nerve impulses in insect neurons accompanied by plateau potentials. The protein is Delta-hexatoxin-Mg1a of Macrothele gigas (Japanese funnel web spider).